The chain runs to 257 residues: Imidazole glycerol phosphate synthase subunit HisF (257 aa).

Catalysis depends on residues aspartate 12 and aspartate 131.

This sequence belongs to the HisA/HisF family. In terms of assembly, heterodimer of HisH and HisF.

Its subcellular location is the cytoplasm. It carries out the reaction 5-[(5-phospho-1-deoxy-D-ribulos-1-ylimino)methylamino]-1-(5-phospho-beta-D-ribosyl)imidazole-4-carboxamide + L-glutamine = D-erythro-1-(imidazol-4-yl)glycerol 3-phosphate + 5-amino-1-(5-phospho-beta-D-ribosyl)imidazole-4-carboxamide + L-glutamate + H(+). Its pathway is amino-acid biosynthesis; L-histidine biosynthesis; L-histidine from 5-phospho-alpha-D-ribose 1-diphosphate: step 5/9. Its function is as follows. IGPS catalyzes the conversion of PRFAR and glutamine to IGP, AICAR and glutamate. The HisF subunit catalyzes the cyclization activity that produces IGP and AICAR from PRFAR using the ammonia provided by the HisH subunit. This Marinomonas sp. (strain MWYL1) protein is Imidazole glycerol phosphate synthase subunit HisF.